The chain runs to 342 residues: Immune-associated nucleotide-binding protein 9 (342 aa).

In terms of domain architecture, AIG1-type G spans 22–229; it reads NPKRTLVLVG…YSDELFHELQ (208 aa). The interval 31–38 is G1; sequence GRTGNGKS. Residues 31 to 39 and Ser52 each bind GTP; that span reads GRTGNGKSA. The G2 stretch occupies residues 58-62; it reads GVTST. Positions 80-83 are G3; it reads DTPG. Residues 149-152 are G4; the sequence is TGGD. The G5 stretch occupies residues 188 to 190; sequence NNK. Asn189 contributes to the GTP binding site. Positions 276 to 342 form a coiled coil; sequence ETKLRDTAKR…QKKLGKCINL (67 aa).

The protein belongs to the TRAFAC class TrmE-Era-EngA-EngB-Septin-like GTPase superfamily. AIG1/Toc34/Toc159-like paraseptin GTPase family. IAN subfamily. As to expression, mainly expressed in leaves.

This Arabidopsis thaliana (Mouse-ear cress) protein is Immune-associated nucleotide-binding protein 9.